Consider the following 102-residue polypeptide: Putative ribosomal protein uL13-like (102 aa).

It belongs to the universal ribosomal protein uL13 family.

In Homo sapiens (Human), this protein is Putative ribosomal protein uL13-like (RPL13AP3).